The sequence spans 744 residues: NAD(P)H-quinone oxidoreductase subunit 5, chloroplastic (744 aa).

A run of 16 helical transmembrane segments spans residues 9-29 (WIIPFLPLPVPMLIGLGLFLF), 40-60 (WAFQSVLLLSIVMIFSMNLSI), 89-109 (IDPLTSIMSILITTVGILVLI), 125-145 (FVYMSFFSTSMLGLVTSSNLI), 147-167 (IYIFWELVGICSYLLIGFWFT), 185-205 (GDFGLLLGILGFYWITGSFEF), 219-239 (NEVNFLFVTLCAVLLFAGAIA), 258-278 (TPISALIHAATMVAAGIFLVA), 290-312 (IMNFISLIGIITVFLGATLALAQ), 327-347 (LGYMMLALGMGSYRSALFHLI), 354-374 (ALLFLGSGSVIHSMETLVGYC), 396-416 (TSFLLGTLSLCGIPPLACFWS), 425-445 (WLYSPIFAIIAWSTAGLTAFY), 549-569 (LFPILILVLFTLFVGFLGIPF), 608-628 (VFSVSISSFGIFIAFFLYKPV), and 724-744 (YLFFYFSYVSIFLLIYYFLNF).

The protein belongs to the complex I subunit 5 family. NDH is composed of at least 16 different subunits, 5 of which are encoded in the nucleus.

It localises to the plastid. The protein localises to the chloroplast thylakoid membrane. It catalyses the reaction a plastoquinone + NADH + (n+1) H(+)(in) = a plastoquinol + NAD(+) + n H(+)(out). The catalysed reaction is a plastoquinone + NADPH + (n+1) H(+)(in) = a plastoquinol + NADP(+) + n H(+)(out). In terms of biological role, NDH shuttles electrons from NAD(P)H:plastoquinone, via FMN and iron-sulfur (Fe-S) centers, to quinones in the photosynthetic chain and possibly in a chloroplast respiratory chain. The immediate electron acceptor for the enzyme in this species is believed to be plastoquinone. Couples the redox reaction to proton translocation, and thus conserves the redox energy in a proton gradient. The sequence is that of NAD(P)H-quinone oxidoreductase subunit 5, chloroplastic (ndhF) from Mutisia acuminata.